A 424-amino-acid chain; its full sequence is Serine hydroxymethyltransferase 1 (424 aa).

(6S)-5,6,7,8-tetrahydrofolate is bound by residues leucine 125 and 129-131 (GHL). Position 234 is an N6-(pyridoxal phosphate)lysine (lysine 234).

It belongs to the SHMT family. Homodimer. Pyridoxal 5'-phosphate is required as a cofactor.

The protein localises to the cytoplasm. The enzyme catalyses (6R)-5,10-methylene-5,6,7,8-tetrahydrofolate + glycine + H2O = (6S)-5,6,7,8-tetrahydrofolate + L-serine. It participates in one-carbon metabolism; tetrahydrofolate interconversion. It functions in the pathway amino-acid biosynthesis; glycine biosynthesis; glycine from L-serine: step 1/1. Functionally, catalyzes the reversible interconversion of serine and glycine with tetrahydrofolate (THF) serving as the one-carbon carrier. This reaction serves as the major source of one-carbon groups required for the biosynthesis of purines, thymidylate, methionine, and other important biomolecules. Also exhibits THF-independent aldolase activity toward beta-hydroxyamino acids, producing glycine and aldehydes, via a retro-aldol mechanism. The polypeptide is Serine hydroxymethyltransferase 1 (Burkholderia lata (strain ATCC 17760 / DSM 23089 / LMG 22485 / NCIMB 9086 / R18194 / 383)).